The primary structure comprises 398 residues: Phosphoglycerate kinase (398 aa).

Substrate-binding positions include 21 to 23, Arg-36, 59 to 62, Arg-119, and Arg-157; these read DFN and HLGR. Residues Lys-208, Gly-296, Glu-327, and 354–357 each bind ATP; that span reads GGDS.

This sequence belongs to the phosphoglycerate kinase family. Monomer.

The protein resides in the cytoplasm. It carries out the reaction (2R)-3-phosphoglycerate + ATP = (2R)-3-phospho-glyceroyl phosphate + ADP. It functions in the pathway carbohydrate degradation; glycolysis; pyruvate from D-glyceraldehyde 3-phosphate: step 2/5. This Streptococcus pyogenes serotype M5 (strain Manfredo) protein is Phosphoglycerate kinase.